We begin with the raw amino-acid sequence, 324 residues long: Myb-like DNA-binding protein myb-1 (324 aa).

HTH myb-type domains are found at residues 4-59 (MPDQ…KPGL) and 60-110 (NHGP…NRKK). The tract at residues 107–231 (NRKKNQLRRQ…PTGSTLRLLT (125 aa)) is disordered. Residues 155–165 (RRPSSPSSFND) show a composition bias toward polar residues. The segment covering 166-175 (SLHHRVHESI) has biased composition (basic and acidic residues). 2 stretches are compositionally biased toward low complexity: residues 183 to 192 (QQQQQQQQQQ) and 222 to 231 (PTGSTLRLLT).

The protein resides in the nucleus. The protein is Myb-like DNA-binding protein myb-1 (rca-1) of Neurospora crassa (strain ATCC 24698 / 74-OR23-1A / CBS 708.71 / DSM 1257 / FGSC 987).